A 790-amino-acid polypeptide reads, in one-letter code: DNA ligase 1 (790 aa).

The N-terminal 64 residues, 1–64 (MLAIRSSNYL…AFDALMSNAR (64 aa)), are a transit peptide targeting the mitochondrion. Residues 64–142 (RAAAKKKTPQ…TGAKKAKTLS (79 aa)) are disordered. The short motif at 68 to 75 (KKKTPQTT) is the Nuclear localization signal 1 element. Residues 116–128 (DSANPRSDTSSIA) are compositionally biased toward polar residues. An interaction with target DNA region spans residues 337 to 346 (KLRLGFSGQT). E442 is an ATP binding site. K444 acts as the N6-AMP-lysine intermediate in catalysis. 2 residues coordinate ATP: R449 and R465. Position 497 (E497) interacts with Mg(2+). A Nuclear localization signal 2 motif is present at residues 505-512 (KKKILPFQ). Residues 518–520 (ARK) form an interaction with target DNA region. E596 is a binding site for Mg(2+). Residues K601, R614, and K620 each coordinate ATP. Residues 757 to 790 (DKKPEEATSSEQIADLYQAQKHNHPSNEVKGDDD) form a disordered region. The span at 781 to 790 (PSNEVKGDDD) shows a compositional bias: basic and acidic residues.

It belongs to the ATP-dependent DNA ligase family. The cofactor is Mg(2+). Expressed in all vegetative and reproductive tissues.

It is found in the mitochondrion. The protein resides in the nucleus. It catalyses the reaction ATP + (deoxyribonucleotide)n-3'-hydroxyl + 5'-phospho-(deoxyribonucleotide)m = (deoxyribonucleotide)n+m + AMP + diphosphate.. In terms of biological role, essential protein. DNA ligase that seals nicks in double-stranded DNA during DNA replication, DNA recombination and DNA repair. Involved in repair of both single strand breaks (SSBs) and double strand breaks (DSBs). Required in the endosperm for embryogenesis, probably to repair DNA-breaks generated by DME. This Arabidopsis thaliana (Mouse-ear cress) protein is DNA ligase 1 (LIG1).